A 230-amino-acid chain; its full sequence is Cytochrome b6-f complex iron-sulfur subunit, chloroplastic (230 aa).

Residues 1 to 50 (MSSTTLSPTTPSQLCSGKSGISCPSIALLVKPTRTQMTGRGNKGMKITCQ) constitute a chloroplast transit peptide. A helical membrane pass occupies residues 72-92 (LLGALSLPTAGMLVPYGSFLV). Positions 115 to 213 (ATEWLKTHAP…VGVEDGKVVF (99 aa)) constitute a Rieske domain. [2Fe-2S] cluster contacts are provided by cysteine 157, histidine 159, cysteine 175, and histidine 178. A disulfide bridge connects residues cysteine 162 and cysteine 177.

The protein belongs to the Rieske iron-sulfur protein family. As to quaternary structure, the 4 large subunits of the cytochrome b6-f complex are cytochrome b6, subunit IV (17 kDa polypeptide, petD), cytochrome f and the Rieske protein, while the 4 small subunits are petG, petL, petM and petN. The complex functions as a dimer. It depends on [2Fe-2S] cluster as a cofactor.

Its subcellular location is the plastid. The protein localises to the chloroplast thylakoid membrane. It catalyses the reaction 2 oxidized [plastocyanin] + a plastoquinol + 2 H(+)(in) = 2 reduced [plastocyanin] + a plastoquinone + 4 H(+)(out). Its function is as follows. Component of the cytochrome b6-f complex, which mediates electron transfer between photosystem II (PSII) and photosystem I (PSI), cyclic electron flow around PSI, and state transitions. The polypeptide is Cytochrome b6-f complex iron-sulfur subunit, chloroplastic (petC) (Pisum sativum (Garden pea)).